The primary structure comprises 707 residues: Polyribonucleotide nucleotidyltransferase (707 aa).

2 residues coordinate Mg(2+): D488 and D494. The KH domain maps to 554–613 (PRLFTMKINQDKIREVIGKGGETIRSITAETGTEINIAEDGTITIAATTQEAGDAAKKRI). In terms of domain architecture, S1 motif spans 623 to 693 (GKVYEGTVVK…DRGRVRLSIK (71 aa)).

Belongs to the polyribonucleotide nucleotidyltransferase family. Mg(2+) is required as a cofactor.

Its subcellular location is the cytoplasm. The enzyme catalyses RNA(n+1) + phosphate = RNA(n) + a ribonucleoside 5'-diphosphate. Its function is as follows. Involved in mRNA degradation. Catalyzes the phosphorolysis of single-stranded polyribonucleotides processively in the 3'- to 5'-direction. The sequence is that of Polyribonucleotide nucleotidyltransferase from Neisseria meningitidis serogroup B (strain ATCC BAA-335 / MC58).